The primary structure comprises 387 residues: 4-hydroxy-3-methylbut-2-en-1-yl diphosphate synthase (flavodoxin) (387 aa).

Residues Cys-280, Cys-283, Cys-315, and Glu-322 each contribute to the [4Fe-4S] cluster site.

Belongs to the IspG family. The cofactor is [4Fe-4S] cluster.

The catalysed reaction is (2E)-4-hydroxy-3-methylbut-2-enyl diphosphate + oxidized [flavodoxin] + H2O + 2 H(+) = 2-C-methyl-D-erythritol 2,4-cyclic diphosphate + reduced [flavodoxin]. It participates in isoprenoid biosynthesis; isopentenyl diphosphate biosynthesis via DXP pathway; isopentenyl diphosphate from 1-deoxy-D-xylulose 5-phosphate: step 5/6. Converts 2C-methyl-D-erythritol 2,4-cyclodiphosphate (ME-2,4cPP) into 1-hydroxy-2-methyl-2-(E)-butenyl 4-diphosphate. This chain is 4-hydroxy-3-methylbut-2-en-1-yl diphosphate synthase (flavodoxin), found in Mycobacterium bovis (strain ATCC BAA-935 / AF2122/97).